The following is a 184-amino-acid chain: MSIKLGYLFKLPSYKTSSISPEVIVDLEKFLNLCEGSCSQCNTPFCVDVGPRNAIIQLPNGADVLNLNPNFQAIFECCSKNSLTGVQIFGMYNDGTYELRSFCPVHGVNEDPANGSGAGSVGVFFALNNPSIISSDFAHLLFNQGKILGRNALIRVAIKLSANGLYDIHVGGGSKICISGTAEI.

This sequence belongs to the PhzF family.

The protein resides in the cytoplasm. It localises to the nucleus. This is an uncharacterized protein from Schizosaccharomyces pombe (strain 972 / ATCC 24843) (Fission yeast).